The chain runs to 420 residues: MSHGKMPLVLSLVLILCGLFNSISCEKQQTSPKTITPVSFKRIAALSQKMEANYKAFAQELFKTLLIEDPRKNMIFSPVSISISLATLSLGLRSATRTNAIDVLERDLRNLRVWDKHQALQHLVEMLHELEKKKQLKHKDIFFIDRNKKMNQMFLKEIDRVYKVDIQMIDFKDKEKTKKAINQFVADKIDKKAKNLITHLDPQTLLCLVNYVFFKGILERAFQTNLTKKEDFFVNEKTIVQVDMMRKTERMIYSRSEELLATMVKMPCKENASIILVLPDTGKFDFALKEMAAKRARLQKTNELQIGALSCAQDQDHLQDRFKHLLPKIGINDIFTTKAVTWNTTRTSTILEAVHHAVIEVKEDGLTKNAAKDKDFWKVPVDKKEVPVVVKFDRPFFLFVEDEITRRDLFVAKVFNPKTE.

The first 25 residues, 1–25, serve as a signal peptide directing secretion; that stretch reads MSHGKMPLVLSLVLILCGLFNSISC. N-linked (GlcNAc...) asparagine glycans are attached at residues asparagine 225, asparagine 271, and asparagine 343.

This sequence belongs to the serpin family. UTMP subfamily.

The protein resides in the secreted. Its subcellular location is the extracellular space. The polypeptide is Uteroferrin-associated basic protein 2 (Sus scrofa (Pig)).